We begin with the raw amino-acid sequence, 49 residues long: U3-plectoxin-Pt1a (49 aa).

5 disulfide bridges follow: Cys-2-Cys-16, Cys-9-Cys-30, Cys-15-Cys-41, Cys-32-Cys-39, and Cys-45-Cys-49.

In terms of tissue distribution, expressed by the venom gland.

The protein localises to the secreted. Potent toxin that may paralyze and/or kill insect pests such as H.virescens (lepidoptera), S.exigua (beet armyworm) and M.sexta (tobacco hornworm). The polypeptide is U3-plectoxin-Pt1a (Plectreurys tristis (Spider)).